We begin with the raw amino-acid sequence, 387 residues long: 3-ketoacyl-CoA thiolase (387 aa).

C91 acts as the Acyl-thioester intermediate in catalysis. Active-site proton acceptor residues include H343 and C373.

The protein belongs to the thiolase-like superfamily. Thiolase family. As to quaternary structure, heterotetramer of two alpha chains (FadB) and two beta chains (FadA).

Its subcellular location is the cytoplasm. The catalysed reaction is an acyl-CoA + acetyl-CoA = a 3-oxoacyl-CoA + CoA. Its pathway is lipid metabolism; fatty acid beta-oxidation. In terms of biological role, catalyzes the final step of fatty acid oxidation in which acetyl-CoA is released and the CoA ester of a fatty acid two carbons shorter is formed. This Yersinia enterocolitica serotype O:8 / biotype 1B (strain NCTC 13174 / 8081) protein is 3-ketoacyl-CoA thiolase.